Consider the following 100-residue polypeptide: Sec-independent protein translocase protein TatA (100 aa).

A helical transmembrane segment spans residues 1 to 21 (MGALKPWHIAVLVVVLILLFG). Basic and acidic residues predominate over residues 44–55 (KSLHDDDRDLAE). The interval 44–100 (KSLHDDDRDLAEKANAQAGYQPLPPQVQQEPYPQQTPYQAPPQQQPVVDPVQRARDS) is disordered. The span at 69–81 (QVQQEPYPQQTPY) shows a compositional bias: low complexity.

This sequence belongs to the TatA/E family. In terms of assembly, the Tat system comprises two distinct complexes: a TatABC complex, containing multiple copies of TatA, TatB and TatC subunits, and a separate TatA complex, containing only TatA subunits. Substrates initially bind to the TatABC complex, which probably triggers association of the separate TatA complex to form the active translocon.

The protein localises to the cell membrane. Part of the twin-arginine translocation (Tat) system that transports large folded proteins containing a characteristic twin-arginine motif in their signal peptide across membranes. TatA could form the protein-conducting channel of the Tat system. The polypeptide is Sec-independent protein translocase protein TatA (Salinispora arenicola (strain CNS-205)).